Here is a 100-residue protein sequence, read N- to C-terminus: Small ribosomal subunit protein uS14c (100 aa).

Belongs to the universal ribosomal protein uS14 family. In terms of assembly, part of the 30S ribosomal subunit.

Its subcellular location is the plastid. It localises to the chloroplast. Functionally, binds 16S rRNA, required for the assembly of 30S particles. This Staurastrum punctulatum (Green alga) protein is Small ribosomal subunit protein uS14c.